We begin with the raw amino-acid sequence, 353 residues long: Probable peptide ABC transporter ATP-binding protein y4tS (353 aa).

The ABC transporter domain occupies 6 to 256 (LKVESLTKHY…PVHPYTEALI (251 aa)). An ATP-binding site is contributed by 49 to 56 (GESGCGKS).

This sequence belongs to the ABC transporter superfamily.

It localises to the cell inner membrane. Functionally, probably part of a binding-protein-dependent transport system y4tOPQRS for a peptide. Probably responsible for energy coupling to the transport system. The chain is Probable peptide ABC transporter ATP-binding protein y4tS from Sinorhizobium fredii (strain NBRC 101917 / NGR234).